The sequence spans 39 residues: Natriuretic peptide NsNP-b (39 aa).

The propeptide occupies 1–8 (SGSKTAKI). Residues Cys-12 and Cys-28 are joined by a disulfide bond. A disordered region spans residues 19–39 (RIGSTSGMGCGSVPKPTPGGS).

Belongs to the natriuretic peptide family. Expressed by the venom gland.

It localises to the secreted. Its function is as follows. Snake venom natriuretic peptide that targets both NPR1 and NPR2. Exhibits hypotensive and vasodepressor activities. This chain is Natriuretic peptide NsNP-b, found in Notechis scutatus scutatus (Mainland tiger snake).